The primary structure comprises 282 residues: Transmembrane protein 41B (282 aa).

Residues 1 to 36 (MAKKRAGNRETESSPLVEQEPRPSKETPVPKGAQSP) are disordered. The next 6 membrane-spanning stretches (helical) occupy residues 43-63 (MSIL…YLVF), 102-122 (TQVL…AIPG), 138-160 (LALF…LSYL), 188-208 (LINY…FINI), 216-236 (PLGV…FVAI), and 251-271 (AVSW…ILPV). Residues 131 to 242 (GYLYPFPLAL…FVAINAGTTL (112 aa)) form a VTT domain; required for its function in autophagy region.

Belongs to the TMEM41 family.

Its subcellular location is the endoplasmic reticulum membrane. The protein localises to the endomembrane system. The enzyme catalyses a 1,2-diacyl-sn-glycero-3-phospho-L-serine(in) = a 1,2-diacyl-sn-glycero-3-phospho-L-serine(out). It carries out the reaction cholesterol(in) = cholesterol(out). It catalyses the reaction a 1,2-diacyl-sn-glycero-3-phosphocholine(in) = a 1,2-diacyl-sn-glycero-3-phosphocholine(out). The catalysed reaction is a 1,2-diacyl-sn-glycero-3-phosphoethanolamine(in) = a 1,2-diacyl-sn-glycero-3-phosphoethanolamine(out). In terms of biological role, phospholipid scramblase involved in lipid homeostasis and membrane dynamics processes. Has phospholipid scramblase activity toward cholesterol and phosphatidylserine, as well as phosphatidylethanolamine and phosphatidylcholine. Required for autophagosome formation: participates in early stages of autophagosome biogenesis at the endoplasmic reticulum (ER) membrane by reequilibrating the leaflets of the ER as lipids are extracted by atg2 (atg2a or atg2b) to mediate autophagosome assembly. In addition to autophagy, involved in other processes in which phospholipid scramblase activity is required. Required for normal motor neuron development. This Danio rerio (Zebrafish) protein is Transmembrane protein 41B.